A 211-amino-acid polypeptide reads, in one-letter code: MVTPQHAQELSTGARELGIDLSEAQHEQLLAYLALLIKWNKAYNLTAVRNPDEMVSRHLLDSLSVVPFIEGTRWMDVGSGGGMPGIPMAILFPERNISLLDSNGKKTRFQTQVKLELKLDNLEVIHSRAENYQPDVPFDGIISRAFSSLEDFAGWTRHMGDVNTRWLAMKGLHPADELVALPSDFHLDSAQALTVPGCQGQRHLLILRRTA.

Residues Gly-78, Met-83, 129–130 (AE), and Arg-144 each bind S-adenosyl-L-methionine.

It belongs to the methyltransferase superfamily. RNA methyltransferase RsmG family.

The protein resides in the cytoplasm. It carries out the reaction guanosine(527) in 16S rRNA + S-adenosyl-L-methionine = N(7)-methylguanosine(527) in 16S rRNA + S-adenosyl-L-homocysteine. Specifically methylates the N7 position of guanine in position 527 of 16S rRNA. This is Ribosomal RNA small subunit methyltransferase G from Pseudomonas syringae pv. tomato (strain ATCC BAA-871 / DC3000).